Reading from the N-terminus, the 1146-residue chain is Reverse gyrase 1 (1146 aa).

The RG N-terminal-type zinc-finger motif lies at 1–38 (MIKAIFDTLCPNCGGEISAERLLKGLPCEKCLPEEVNR). Zn(2+) is bound by residues Cys10, Cys13, Cys28, and Cys31. ATP contacts are provided by residues Gln79 and 96–103 (APTGVGKT). In terms of domain architecture, Helicase ATP-binding spans 83-240 (ARKVFLGRSF…RLKEKPNKSE (158 aa)). Residues 197-200 (DDVD) carry the DEAD box motif. One can recognise a Helicase C-terminal domain in the interval 412–565 (HLLWALLSLR…FKKIEEVDLK (154 aa)). Positions 592–1146 (EHVKPVLVVV…KVNEFEKANV (555 aa)) are topoisomerase I. The region spanning 596–728 (PVLVVVESPN…NVERIEFHEV (133 aa)) is the Toprim domain. Mg(2+)-binding residues include Glu602 and Asp697. The 399-residue stretch at 744–1142 (NENLVKAQLV…ELYKKVNEFE (399 aa)) folds into the Topo IA-type catalytic domain. Residue Tyr891 is the O-(5'-phospho-DNA)-tyrosine intermediate of the active site.

The protein in the N-terminal section; belongs to the DEAD box helicase family. DDVD subfamily. This sequence in the C-terminal section; belongs to the type IA topoisomerase family. As to quaternary structure, monomer. Requires Zn(2+) as cofactor. Mg(2+) serves as cofactor.

The protein resides in the cytoplasm. It catalyses the reaction ATP + H2O = ADP + phosphate + H(+). Functionally, modifies the topological state of DNA by introducing positive supercoils in an ATP-dependent process, increasing the linking number in steps of +1. Binds to single-stranded DNA, transiently cleaves and then rejoins the ends, introducing a positive supercoil in the process. The scissile phosphodiester is attacked by the catalytic tyrosine of the enzyme, resulting in the formation of a DNA-(5'-phosphotyrosyl)-enzyme intermediate. Probably involved in rewinding DNA strands in regions of the chromosome that have opened up to allow replication, transcription, DNA repair and/or for DNA protection. This Aquifex aeolicus (strain VF5) protein is Reverse gyrase 1.